The primary structure comprises 234 residues: OVARIAN TUMOR DOMAIN-containing deubiquitinating enzyme 3 (234 aa).

In terms of domain architecture, OTU spans 76 to 234 (YAVDRVKGDG…SGRNHYDLLR (159 aa)). A cys-loop region spans residues 81–87 (VKGDGRC). Residue Asp-84 is part of the active site. The active-site Nucleophile is Cys-87. The tract at residues 154–164 (IGRHDFWGGES) is variable-loop. A his-loop region spans residues 224–229 (YSGRNH). Residue His-229 is part of the active site.

This sequence belongs to the peptidase C85 family.

The catalysed reaction is Thiol-dependent hydrolysis of ester, thioester, amide, peptide and isopeptide bonds formed by the C-terminal Gly of ubiquitin (a 76-residue protein attached to proteins as an intracellular targeting signal).. Its function is as follows. Hydrolase that can remove conjugated ubiquitin from proteins in vitro and may therefore play an important regulatory role at the level of protein turnover by preventing degradation. Cysteine protease with a preference for 'Lys-63' over 'Lys-48' over 'Met-1' -linked ubiquitin (UB) tetramers (e.g. Ub3 and Ub4) as substrates. Also cleaves RUB-GST fusion. In Arabidopsis thaliana (Mouse-ear cress), this protein is OVARIAN TUMOR DOMAIN-containing deubiquitinating enzyme 3.